Here is a 185-residue protein sequence, read N- to C-terminus: Dioxygenase easH (185 aa).

Positions 17, 19, and 93 each coordinate Fe cation.

The protein belongs to the PhyH family. In terms of assembly, homodimer. Requires Fe cation as cofactor.

Its pathway is alkaloid biosynthesis; ergot alkaloid biosynthesis. Its function is as follows. Dioxygenase; part of the gene cluster that mediates the biosynthesis of fungal ergot alkaloid ergovaline, the predominant ergopeptine product in E.festucae var. lolii. DmaW catalyzes the first step of ergot alkaloid biosynthesis by condensing dimethylallyl diphosphate (DMAP) and tryptophan to form 4-dimethylallyl-L-tryptophan. The second step is catalyzed by the methyltransferase easF that methylates 4-dimethylallyl-L-tryptophan in the presence of S-adenosyl-L-methionine, resulting in the formation of 4-dimethylallyl-L-abrine. The catalase easC and the FAD-dependent oxidoreductase easE then transform 4-dimethylallyl-L-abrine to chanoclavine-I which is further oxidized by easD in the presence of NAD(+), resulting in the formation of chanoclavine-I aldehyde. Agroclavine dehydrogenase easG then mediates the conversion of chanoclavine-I aldehyde to agroclavine via a non-enzymatic adduct reaction: the substrate is an iminium intermediate that is formed spontaneously from chanoclavine-I aldehyde in the presence of glutathione. The presence of easA is not required to complete this reaction. Further conversion of agroclavine to paspalic acid is a two-step process involving oxidation of agroclavine to elymoclavine and of elymoclavine to paspalic acid, the second step being performed by the elymoclavine oxidase cloA. Paspalic acid is then further converted to D-lysergic acid. Ergovaline is assembled from D-lysergic acid and three different amino acids by the D-lysergyl-peptide-synthetase composed of a monomudular (lpsB) and a trimodular (lpsA) nonribosomal peptide synthetase subunit. The polypeptide is Dioxygenase easH (Epichloe festucae var. lolii (Neotyphodium lolii)).